Consider the following 543-residue polypeptide: Protein phosphatase 1G (543 aa).

A lipid anchor (N-myristoyl glycine) is attached at glycine 2. Arginine 22 carries the post-translational modification Omega-N-methylarginine. In terms of domain architecture, PPM-type phosphatase spans 26 to 503 (PYGFSAMQGW…DNMTCIIICF (478 aa)). Mn(2+) is bound by residues aspartate 60 and glycine 61. 2 disordered regions span residues 116–139 (QIAG…DVDN) and 163–326 (NCHK…SDSG). Threonine 122 carries the post-translational modification Phosphothreonine. The segment covering 123-139 (EDEDEKEKVADEDDVDN) has biased composition (acidic residues). Serine 183 carries the phosphoserine modification. The span at 259-310 (DSEDESDEAEEEEEDSEECSEEEDGYSSEEAENEEDEDDTEEAEEDDEEEEM) shows a compositional bias: acidic residues. An N6-acetyllysine modification is found at lysine 381. Residues aspartate 439 and aspartate 494 each coordinate Mn(2+). A disordered region spans residues 508 to 543 (TAAPQPESGKRKLEEVLSTEGAEENGNSDKKKAKRD). Serine 525 carries the post-translational modification Phosphoserine.

Belongs to the PP2C family. As to quaternary structure, interacts with NOL3; may dephosphorylate NOL3. Mg(2+) serves as cofactor. The cofactor is Mn(2+).

The protein resides in the cytoplasm. It is found in the membrane. It catalyses the reaction O-phospho-L-seryl-[protein] + H2O = L-seryl-[protein] + phosphate. The catalysed reaction is O-phospho-L-threonyl-[protein] + H2O = L-threonyl-[protein] + phosphate. In Bos taurus (Bovine), this protein is Protein phosphatase 1G (PPM1G).